The primary structure comprises 186 residues: Elongation factor P (186 aa).

Belongs to the elongation factor P family.

It localises to the cytoplasm. It functions in the pathway protein biosynthesis; polypeptide chain elongation. Functionally, involved in peptide bond synthesis. Stimulates efficient translation and peptide-bond synthesis on native or reconstituted 70S ribosomes in vitro. Probably functions indirectly by altering the affinity of the ribosome for aminoacyl-tRNA, thus increasing their reactivity as acceptors for peptidyl transferase. The protein is Elongation factor P of Shewanella denitrificans (strain OS217 / ATCC BAA-1090 / DSM 15013).